A 100-amino-acid chain; its full sequence is Putative antiporter subunit mnhF2 (100 aa).

Helical transmembrane passes span Phe5 to Leu25, Val38 to Asn60, and Leu65 to Gly87.

Belongs to the CPA3 antiporters (TC 2.A.63) subunit F family. May form a heterooligomeric complex that consists of seven subunits: mnhA2, mnhB2, mnhC2, mnhD2, mnhE2, mnhF2 and mnhG2.

It localises to the cell membrane. The sequence is that of Putative antiporter subunit mnhF2 (mnhF2) from Staphylococcus epidermidis (strain ATCC 35984 / DSM 28319 / BCRC 17069 / CCUG 31568 / BM 3577 / RP62A).